Reading from the N-terminus, the 178-residue chain is MEQYHGTTIVSVRRGNQVALGGDGQVTLGNIVMKGTARKVRRIYNGKVLVGFAGSTADAFSLLDRFEAKLEKYQGNLTRAAVDLAKDWRSDRALRRLEAMLITADRDTTLVITGNGDVLDPEGGIAAIGSGGAYAQSAAKALAENTEMAPKDVVEKALTIAGELCIYTNTNFVIETLE.

Residue T7 is part of the active site. Na(+) contacts are provided by G162, C165, and T168.

This sequence belongs to the peptidase T1B family. HslV subfamily. As to quaternary structure, a double ring-shaped homohexamer of HslV is capped on each side by a ring-shaped HslU homohexamer. The assembly of the HslU/HslV complex is dependent on binding of ATP.

The protein resides in the cytoplasm. The enzyme catalyses ATP-dependent cleavage of peptide bonds with broad specificity.. With respect to regulation, allosterically activated by HslU binding. Functionally, protease subunit of a proteasome-like degradation complex believed to be a general protein degrading machinery. The sequence is that of ATP-dependent protease subunit HslV from Cupriavidus necator (strain ATCC 17699 / DSM 428 / KCTC 22496 / NCIMB 10442 / H16 / Stanier 337) (Ralstonia eutropha).